The sequence spans 273 residues: SET domain-containing protein 9 (273 aa).

The SET domain occupies 96–269 (FSVAQATSSL…QGEELFSNYY (174 aa)). Position 268 (tyrosine 268) interacts with S-adenosyl-L-methionine.

Belongs to the class V-like SAM-binding methyltransferase superfamily.

The polypeptide is SET domain-containing protein 9 (SETD9) (Pongo abelii (Sumatran orangutan)).